The primary structure comprises 484 residues: tRNA-2-methylthio-N(6)-dimethylallyladenosine synthase (484 aa).

An MTTase N-terminal domain is found at 36-153 (GKLYIKTHGC…LPELIRARRE (118 aa)). Cys45, Cys82, Cys116, Cys190, Cys194, and Cys197 together coordinate [4Fe-4S] cluster. The 240-residue stretch at 176–415 (RAEGPSAFVS…HISAHAASIS (240 aa)) folds into the Radical SAM core domain. Residues 416 to 479 (QSMVGSVQRV…SNSLRGRIQL (64 aa)) form the TRAM domain. A disordered region spans residues 428–450 (EGPSRRDPNELTGKSENMRPVNF).

This sequence belongs to the methylthiotransferase family. MiaB subfamily. As to quaternary structure, monomer. It depends on [4Fe-4S] cluster as a cofactor.

It localises to the cytoplasm. It catalyses the reaction N(6)-dimethylallyladenosine(37) in tRNA + (sulfur carrier)-SH + AH2 + 2 S-adenosyl-L-methionine = 2-methylsulfanyl-N(6)-dimethylallyladenosine(37) in tRNA + (sulfur carrier)-H + 5'-deoxyadenosine + L-methionine + A + S-adenosyl-L-homocysteine + 2 H(+). Its function is as follows. Catalyzes the methylthiolation of N6-(dimethylallyl)adenosine (i(6)A), leading to the formation of 2-methylthio-N6-(dimethylallyl)adenosine (ms(2)i(6)A) at position 37 in tRNAs that read codons beginning with uridine. The protein is tRNA-2-methylthio-N(6)-dimethylallyladenosine synthase of Xanthomonas oryzae pv. oryzae (strain PXO99A).